A 21-amino-acid chain; its full sequence is uncharacterized protein (21 aa).

This is an uncharacterized protein from Methanococcus voltae.